The primary structure comprises 770 residues: MSTGEGTAEQTATGTPAQNGRESIPSDAIREEYENLSDLIRKYRFAYYQDDAPLVSDAEFDTLFRRLEEIEALHPELVANDSPTQEVGGEASAAFAAVEHLQRMYSLEDVFSIEELEAWLNRAEASIAKLGDGTAQAAWLTELKIDGLAVNLLYRDGKLVRAATRGDGTTGEDITHNVLTIKEIPQQLSGEGYPSEVEVRGEVFIPSKAFAEFNEALIEAGKAPLANPRNAAAGSLRQKDPAETAKRPLKMFVHGIGAREGLEARSQSETYALLKEWGLPVSPYFEVLEARADVLGFISKYGEQRHKLLHEIDGIVIKVDDFATQRALGYTTRVPRWAVAYKYPPEEVHTKLLDIQVNVGRTGRVTPFGMMEPVKVAGSTVEMATLHNQDVVKAKGVKIGDIVVLRKAGDVIPEIVGPVLALRDQQDPPVRDFVMPTECPACGTPLAPAKEGDVDIRCPNGKSCPSQLRERVFHLAGRGGFDIEALGWEAAIALTQPAEPDVPPLTSEAALFDLTREDLADVKIRREKRSKGVATGEYELVPYFYSKGTAKSPSKPTASTEKLFKELDKAKSQPLWRVLVALSIRHVGPRASRALAQAFGTMDGIRAASEEELAHVDGVGPTIAAALKEWFAEDWHREIVDRWAAAGVRMEDERDESTPRTLEGLTVVVTGSLPNFSRDEAKEAILVRGGKASGSVSKNTSYVVAGESAGTKLDKAEQLGIRVLDEDGFRLLLDGGPAAVGDAAEADGGDAPEESAALQEEKAAAVEETA.

Low complexity predominate over residues 1–18 (MSTGEGTAEQTATGTPAQ). Residues 1-27 (MSTGEGTAEQTATGTPAQNGRESIPSD) form a disordered region. NAD(+) contacts are provided by residues 57–61 (DAEFD), 106–107 (SL), and E142. K144 acts as the N6-AMP-lysine intermediate in catalysis. 4 residues coordinate NAD(+): R165, E202, K318, and K342. Residues C439, C442, C458, and C464 each contribute to the Zn(2+) site. A BRCT domain is found at 657–746 (STPRTLEGLT…PAAVGDAAEA (90 aa)). A disordered region spans residues 741–770 (GDAAEADGGDAPEESAALQEEKAAAVEETA). A compositionally biased stretch (acidic residues) spans 744–753 (AEADGGDAPE). The span at 759–770 (QEEKAAAVEETA) shows a compositional bias: basic and acidic residues.

Belongs to the NAD-dependent DNA ligase family. LigA subfamily. The cofactor is Mg(2+). Mn(2+) serves as cofactor.

The catalysed reaction is NAD(+) + (deoxyribonucleotide)n-3'-hydroxyl + 5'-phospho-(deoxyribonucleotide)m = (deoxyribonucleotide)n+m + AMP + beta-nicotinamide D-nucleotide.. DNA ligase that catalyzes the formation of phosphodiester linkages between 5'-phosphoryl and 3'-hydroxyl groups in double-stranded DNA using NAD as a coenzyme and as the energy source for the reaction. It is essential for DNA replication and repair of damaged DNA. This is DNA ligase 1 from Pseudarthrobacter chlorophenolicus (strain ATCC 700700 / DSM 12829 / CIP 107037 / JCM 12360 / KCTC 9906 / NCIMB 13794 / A6) (Arthrobacter chlorophenolicus).